Consider the following 304-residue polypeptide: Glutaminase (304 aa).

Positions 63, 114, 158, 165, 189, 240, and 258 each coordinate substrate.

The protein belongs to the glutaminase family. As to quaternary structure, homotetramer.

The catalysed reaction is L-glutamine + H2O = L-glutamate + NH4(+). This is Glutaminase from Shewanella baltica (strain OS185).